The sequence spans 199 residues: RNA pyrophosphohydrolase (199 aa).

One can recognise a Nudix hydrolase domain in the interval 6-154; sequence GYRPNVGIVL…KREVYELALS (149 aa). Positions 38 to 59 match the Nudix box motif; it reads GGIQHGESPEQAMYRELHEEVG.

It belongs to the Nudix hydrolase family. RppH subfamily. The cofactor is a divalent metal cation.

Its function is as follows. Accelerates the degradation of transcripts by removing pyrophosphate from the 5'-end of triphosphorylated RNA, leading to a more labile monophosphorylated state that can stimulate subsequent ribonuclease cleavage. The sequence is that of RNA pyrophosphohydrolase from Polynucleobacter asymbioticus (strain DSM 18221 / CIP 109841 / QLW-P1DMWA-1) (Polynucleobacter necessarius subsp. asymbioticus).